Consider the following 168-residue polypeptide: Transcription antitermination protein NusB (168 aa).

This sequence belongs to the NusB family.

Its function is as follows. Involved in transcription antitermination. Required for transcription of ribosomal RNA (rRNA) genes. Binds specifically to the boxA antiterminator sequence of the ribosomal RNA (rrn) operons. The polypeptide is Transcription antitermination protein NusB (Prosthecochloris aestuarii (strain DSM 271 / SK 413)).